Reading from the N-terminus, the 362-residue chain is Snurportin-1 (362 aa).

Residue M1 is modified to N-acetylmethionine. Disordered regions lie at residues 1–40 and 69–90; these read MEEL…SLEQ and DWTG…MDVD. Residues 1-65 are necessary for interaction with KPNB1 and m3G-cap U1 and U5 snRNP import receptor activity; that stretch reads MEELSQALAG…LDYVNHARRL (65 aa). Residues 1 to 160 are necessary for interaction with XPO1; it reads MEELSQALAG…NTFPSLLPGG (160 aa). The region spanning 11-73 is the IBB domain; it reads SFSVSQDLNS…RLAEDDWTGM (63 aa). The span at 12–22 shows a compositional bias: polar residues; sequence FSVSQDLNSTA. Residues 69 to 89 show a composition bias toward acidic residues; sequence DWTGMESEEEEEKKDDEEMDV. The residue at position 75 (S75) is a Phosphoserine. The segment at 128 to 130 is interaction with m3G-cap structure; that stretch reads GKR. Positions 210–330 are necessary for binding to the m3G-cap structure; sequence LHSKLPEEEG…GIMGKLTPRA (121 aa). Residues 319–362 form a disordered region; that stretch reads KEGIMGKLTPRASENGHYELEHLSTPKLKSPPQRPNHPESLMEN. Residues 332-342 show a composition bias toward basic and acidic residues; the sequence is ENGHYELEHLS.

This sequence belongs to the snurportin family. In terms of assembly, component of an import snRNP complex composed of KPNB1, SNUPN, SMN1 and ZNF259. Component of a nuclear export receptor complex composed of KPNB1, Ran, SNUPN and XPO1. Found in a trimeric export complex with SNUPN, Ran and XPO1. Interacts (via IBB domain) with KPNB1; the interaction is direct. Interacts with DDX20, IPO7, SMN1, SNRPB and XPO1. Interacts directly with XPO1. Its interaction with XPO1 and binding to m3G-cap U snRNPs appears to be mutually exclusive. Can form homomers.

It localises to the nucleus. The protein localises to the cytoplasm. In terms of biological role, functions as an U snRNP-specific nuclear import adapter. Involved in the trimethylguanosine (m3G)-cap-dependent nuclear import of U snRNPs. Binds specifically to the terminal m3G-cap U snRNAs. This Bos taurus (Bovine) protein is Snurportin-1 (SNUPN).